Reading from the N-terminus, the 504-residue chain is 26S proteasome non-ATPase regulatory subunit 3 (504 aa).

Positions 254 to 433 (ARYMYYQGRI…RDGPRYMQSS (180 aa)) constitute a PCI domain.

This sequence belongs to the proteasome subunit S3 family. The 26S proteasome is composed of a core protease, known as the 20S proteasome, capped at one or both ends by the 19S regulatory complex (RC). The RC is composed of at least 18 different subunits in two subcomplexes, the base and the lid, which form the portions proximal and distal to the 20S proteolytic core, respectively.

Its function is as follows. Acts as a regulatory subunit of the 26 proteasome which is involved in the ATP-dependent degradation of ubiquitinated proteins. The protein is 26S proteasome non-ATPase regulatory subunit 3 (rpn-3) of Caenorhabditis elegans.